Reading from the N-terminus, the 205-residue chain is Urease accessory protein UreG (205 aa).

Residue 14 to 21 coordinates GTP; that stretch reads GPVGSGKT.

This sequence belongs to the SIMIBI class G3E GTPase family. UreG subfamily. Homodimer. UreD, UreF and UreG form a complex that acts as a GTP-hydrolysis-dependent molecular chaperone, activating the urease apoprotein by helping to assemble the nickel containing metallocenter of UreC. The UreE protein probably delivers the nickel.

Its subcellular location is the cytoplasm. Facilitates the functional incorporation of the urease nickel metallocenter. This process requires GTP hydrolysis, probably effectuated by UreG. This chain is Urease accessory protein UreG, found in Enterobacter sp. (strain 638).